The chain runs to 264 residues: Indole-3-glycerol phosphate synthase (264 aa).

The protein belongs to the TrpC family.

It carries out the reaction 1-(2-carboxyphenylamino)-1-deoxy-D-ribulose 5-phosphate + H(+) = (1S,2R)-1-C-(indol-3-yl)glycerol 3-phosphate + CO2 + H2O. Its pathway is amino-acid biosynthesis; L-tryptophan biosynthesis; L-tryptophan from chorismate: step 4/5. The sequence is that of Indole-3-glycerol phosphate synthase from Azoarcus sp. (strain BH72).